The chain runs to 209 residues: Response regulator protein VraR (209 aa).

The 117-residue stretch at K4–S120 folds into the Response regulatory domain. D55 is modified (4-aspartylphosphate). One can recognise an HTH luxR-type domain in the interval R141–N206. A DNA-binding region (H-T-H motif) is located at residues N165–S184.

As to quaternary structure, homodimer. Phosphorylated by VraS. Phosphorylation state of VraR controls dimerization of the protein.

Member of the two-component regulatory system VraS/VraR involved in the control of the cell wall peptidoglycan biosynthesis. Upon cellular stress, the histidine kinase VraS transfers the phosphoryl group onto VraR. Upon phosphorylation, VraR dimerizes at the N-terminal domain. In turn, phosphorylation-induced dimerization expand and enhance the VraR binding to its own promoter leading to increased expression and subsequent modulation of as many as 40 genes, which ultimately constitute the S.aureus response to cell wall damage. In addition, inhibits the host autophagic flux and delays the early stage of autophagosome formation, thereby promoting bacterial survival. Facilitates the ability of S.aureus to resist host polymorphonuclear leukocytes-mediated phagocytosis and killing thus contributing to immune evasion. This is Response regulator protein VraR (vraR) from Staphylococcus aureus (strain NCTC 8325 / PS 47).